Reading from the N-terminus, the 445-residue chain is Mitochondrial enolase superfamily member 1 (445 aa).

Substrate-binding positions include Gly-24 to Asp-26, Tyr-34, and Lys-220. Lys-222 serves as the catalytic Proton donor/acceptor. Residue Asp-250 coordinates Mg(2+). Substrate-binding positions include Asn-252, Glu-276, Glu-305, His-355–Gly-357, and Glu-386. Glu-276 and Glu-305 together coordinate Mg(2+). His-355 is an active-site residue.

This sequence belongs to the mandelate racemase/muconate lactonizing enzyme family. ENOSF1 subfamily. Requires Mg(2+) as cofactor.

The protein localises to the mitochondrion. It catalyses the reaction L-fuconate = 2-dehydro-3-deoxy-L-fuconate + H2O. In terms of biological role, plays a role in the catabolism of L-fucose, a sugar that is part of the carbohydrates that are attached to cellular glycoproteins. Catalyzes the dehydration of L-fuconate to 2-keto-3-deoxy-L-fuconate by the abstraction of the 2-proton to generate an enediolate intermediate that is stabilized by the magnesium ion. May down-regulate thymidylate synthase activity, possibly already at the RNA level, by promoting the degradation of TYMS mRNA via an antisense RNA-based mechanism. The sequence is that of Mitochondrial enolase superfamily member 1 (enosf1) from Xenopus laevis (African clawed frog).